The primary structure comprises 44 residues: Non-structural protein 7b (44 aa).

Residues phenylalanine 9–tryptophan 29 form a helical membrane-spanning segment.

Its subcellular location is the host membrane. This chain is Non-structural protein 7b, found in Bat coronavirus Rp3/2004 (BtCoV/Rp3/2004).